A 109-amino-acid polypeptide reads, in one-letter code: Protein FAM32A-like (109 aa).

Residues 1–48 (MSEYKSVQKGSLKLKGVSLPSKKKKKKNKEMKRLEEQVLTSENEEGTK) form a disordered region. The span at 9-20 (KGSLKLKGVSLP) shows a compositional bias: low complexity. Basic residues predominate over residues 21–30 (SKKKKKKNKE).

It belongs to the FAM32 family.

It is found in the nucleus. In terms of biological role, may induce G2 arrest and apoptosis. May also increase cell sensitivity to apoptotic stimuli. This chain is Protein FAM32A-like (fam32al), found in Danio rerio (Zebrafish).